Here is a 144-residue protein sequence, read N- to C-terminus: Acylphosphatase-like protein MJ1331 (144 aa).

The 93-residue stretch at 8–100 folds into the Acylphosphatase-like domain; that stretch reads TYELRIYGNV…FPNGLNKIST (93 aa).

This Methanocaldococcus jannaschii (strain ATCC 43067 / DSM 2661 / JAL-1 / JCM 10045 / NBRC 100440) (Methanococcus jannaschii) protein is Acylphosphatase-like protein MJ1331.